A 146-amino-acid chain; its full sequence is Large ribosomal subunit protein bL9 (146 aa).

Belongs to the bacterial ribosomal protein bL9 family.

In terms of biological role, binds to the 23S rRNA. In Symbiobacterium thermophilum (strain DSM 24528 / JCM 14929 / IAM 14863 / T), this protein is Large ribosomal subunit protein bL9.